An 86-amino-acid polypeptide reads, in one-letter code: Mu-theraphotoxin-Cg2a 2 (86 aa).

Positions 1–21 (MKVSVVITLAVLGVMFVWASA) are cleaved as a signal peptide. The propeptide occupies 22 to 50 (AELEERGSDQRDSPAWIKSMERIFQSEER). 3 disulfide bridges follow: Cys-52–Cys-66, Cys-59–Cys-71, and Cys-65–Cys-78. Phe-84 bears the Phenylalanine amide mark.

It belongs to the neurotoxin 10 (Hwtx-1) family. 37 (Jztx-31) subfamily. As to expression, expressed by the venom gland.

Its subcellular location is the secreted. Its function is as follows. Inhibits both peak current and fast inactivation of voltage-gated sodium channels (Nav) channels. Inhibits the inactivation of Nav on DRG neurons (EC(50)=1.77 uM) and peak current of cardiac myocytes (IC(50)=0.90 uM). The polypeptide is Mu-theraphotoxin-Cg2a 2 (Chilobrachys guangxiensis (Chinese earth tiger tarantula)).